The sequence spans 432 residues: Acetylserotonin O-methyltransferase (432 aa).

Residues Tyr-146, Trp-163, Asp-209, 235 to 237, and Arg-252 contribute to the S-adenosyl-L-methionine site; that span reads GDF. His-255 functions as the Proton donor/acceptor in the catalytic mechanism. The substrate site is built by Asp-256, Asn-302, and Gln-306. Residues 373–432 form a disordered region; that stretch reads VPGARSDAAGTGSGTGNTGSGIMLQGETLESEVSAPQAGSDVGGAGNEPRSGTLKQGDWK.

The protein belongs to the class I-like SAM-binding methyltransferase superfamily. Cation-independent O-methyltransferase family. Homodimer. As to expression, expressed predominantly in the pineal gland (at protein level). Very low expression, if any, in the retina.

It carries out the reaction N-acetylserotonin + S-adenosyl-L-methionine = melatonin + S-adenosyl-L-homocysteine + H(+). The protein operates within aromatic compound metabolism; melatonin biosynthesis; melatonin from serotonin: step 1/2. Catalyzes the transfer of a methyl group onto N-acetylserotonin, producing melatonin (N-acetyl-5-methoxytryptamine). The protein is Acetylserotonin O-methyltransferase (Asmt) of Rattus norvegicus (Rat).